The following is a 72-amino-acid chain: Large ribosomal subunit protein uL29 (72 aa).

The protein belongs to the universal ribosomal protein uL29 family.

This is Large ribosomal subunit protein uL29 from Prochlorococcus marinus (strain MIT 9215).